Here is a 220-residue protein sequence, read N- to C-terminus: UPF0441 protein Spro_4274 (220 aa).

The interval 181–220 (MAPKPAVTNTVTRGGFGESVAKQTSMQRSSATSSSRSMGG) is disordered. Positions 203–220 (QTSMQRSSATSSSRSMGG) are enriched in low complexity.

Belongs to the UPF0441 family.

The polypeptide is UPF0441 protein Spro_4274 (Serratia proteamaculans (strain 568)).